An 880-amino-acid polypeptide reads, in one-letter code: MKKLTSTEIRQKWLDFFESKNHLVIESKSLIPVNDSSLLWINSGVATLKNYFSGKKVPPAFRLTNSQKAIRTNDIENVGVTSRHHTFFEMLGNFSIGNYFKKEAIAYAKEFLVNVLEMDFEKLYFTYYEEDLEAKNYWLENGVDESHLISGTRDTNFWDLGSGPCGPCTEIFYDRGEKYDRRGLDLLKNDIENDRYIEIWNIVFSQFNNDGEGNYTELKQKNIDTGAGLERLASIMQDVPTNYDSDLFINIIREIEKYSPYKYVIENYFAKDEHQGEINTNFKIIADHIRTVVNAIADGAKVSNVGRGYIIRRLLRRSYYKGMQLGIKDLFLHKLVKVVKDSLPYEYNEKDVIDAIKEEELLFSKTIEKGKILLESFLDNENKVFDGAVAFNLLETYGFPIELTAEILHQKGISVDMDAFELAKEKHALASKGGKATGMDKVINSLALIDKKMDNFVGYSELSANSKVLKLFDEENEVEGFETGGYVLLETTPFYATSGGQRHDKGFIIQGENKIKIIDVFKDKFGNHIHFVEGKMNNHEPVSSFVDPNIRIGLERNHSGTHLLFCALRNVLGSHIEQLGSDNNEERLTFDFPADEKPSDEQIKAVEDLVRSYITKSIDREYITTTVDKAREMGAIMTLEEGEYMDPRAIRVVRFGDITSDLCGGTHLSNTSKLESFKITNVEKKQAGVFRIRAISSSKLVNEYLSKVNKKLNEELATIIKKIKELKSDYVAPAINENEPDIETLNASINKRIDELREVYKQLLKESSNLEFDYETVKFDKIKDYDVYINLDVDASAVKLIAASIRDKFQLGKTVAIIGSKNENELLLAIATRAIDANKMFKKLASELNGRGGGAPILAMGKMNYSEDIESLIKDYLPDA.

The Zn(2+) site is built by His-558, His-562, Cys-663, and His-667.

The protein belongs to the class-II aminoacyl-tRNA synthetase family. Zn(2+) serves as cofactor.

The protein resides in the cytoplasm. The enzyme catalyses tRNA(Ala) + L-alanine + ATP = L-alanyl-tRNA(Ala) + AMP + diphosphate. Functionally, catalyzes the attachment of alanine to tRNA(Ala) in a two-step reaction: alanine is first activated by ATP to form Ala-AMP and then transferred to the acceptor end of tRNA(Ala). Also edits incorrectly charged Ser-tRNA(Ala) and Gly-tRNA(Ala) via its editing domain. The protein is Alanine--tRNA ligase of Mycoplasmopsis agalactiae (strain NCTC 10123 / CIP 59.7 / PG2) (Mycoplasma agalactiae).